Here is a 745-residue protein sequence, read N- to C-terminus: Chitin synthase D (745 aa).

Transmembrane regions (helical) follow at residues 26–46, 55–75, 412–432, 434–454, and 464–484; these read LAHRGIFLPVMIVTLPLPVHL, VLMLQWFAFGMFSVLLIIPWL, TTALLFFIIALSLITTSSSIN, LPVGFIAISLGLNYVLMFYLG, and LFPLMFILNPFFNWLYMVYGI. 2 disordered regions span residues 613 to 635 and 672 to 745; these read TGDNDNMKPYPDRQPRDTSSLHQ and ILPH…ESMV. Over residues 707–720 the composition is skewed to polar residues; it reads NASTRGSMEGNTPE.

Belongs to the chitin synthase family. Class VI subfamily.

The protein localises to the cell membrane. The enzyme catalyses [(1-&gt;4)-N-acetyl-beta-D-glucosaminyl](n) + UDP-N-acetyl-alpha-D-glucosamine = [(1-&gt;4)-N-acetyl-beta-D-glucosaminyl](n+1) + UDP + H(+). Its function is as follows. Polymerizes chitin, a structural polymer of the cell wall and septum, by transferring the sugar moiety of UDP-GlcNAc to the non-reducing end of the growing chitin polymer. The protein is Chitin synthase D (chsD) of Aspergillus fumigatus (strain ATCC MYA-4609 / CBS 101355 / FGSC A1100 / Af293) (Neosartorya fumigata).